The primary structure comprises 257 residues: Indole-3-glycerol phosphate synthase (257 aa).

Belongs to the TrpC family.

The catalysed reaction is 1-(2-carboxyphenylamino)-1-deoxy-D-ribulose 5-phosphate + H(+) = (1S,2R)-1-C-(indol-3-yl)glycerol 3-phosphate + CO2 + H2O. Its pathway is amino-acid biosynthesis; L-tryptophan biosynthesis; L-tryptophan from chorismate: step 4/5. The sequence is that of Indole-3-glycerol phosphate synthase from Phenylobacterium zucineum (strain HLK1).